The following is a 156-amino-acid chain: SsrA-binding protein (156 aa).

It belongs to the SmpB family.

Its subcellular location is the cytoplasm. Its function is as follows. Required for rescue of stalled ribosomes mediated by trans-translation. Binds to transfer-messenger RNA (tmRNA), required for stable association of tmRNA with ribosomes. tmRNA and SmpB together mimic tRNA shape, replacing the anticodon stem-loop with SmpB. tmRNA is encoded by the ssrA gene; the 2 termini fold to resemble tRNA(Ala) and it encodes a 'tag peptide', a short internal open reading frame. During trans-translation Ala-aminoacylated tmRNA acts like a tRNA, entering the A-site of stalled ribosomes, displacing the stalled mRNA. The ribosome then switches to translate the ORF on the tmRNA; the nascent peptide is terminated with the 'tag peptide' encoded by the tmRNA and targeted for degradation. The ribosome is freed to recommence translation, which seems to be the essential function of trans-translation. The sequence is that of SsrA-binding protein from Clostridium beijerinckii (strain ATCC 51743 / NCIMB 8052) (Clostridium acetobutylicum).